We begin with the raw amino-acid sequence, 194 residues long: Orotate phosphoribosyltransferase (194 aa).

5-phospho-alpha-D-ribose 1-diphosphate contacts are provided by residues Arg102, Lys103, Lys106, His108, and 129-137 (EDVVTTGGS). 2 residues coordinate orotate: Thr133 and Arg161.

It belongs to the purine/pyrimidine phosphoribosyltransferase family. PyrE subfamily. As to quaternary structure, homodimer. Mg(2+) is required as a cofactor.

It carries out the reaction orotidine 5'-phosphate + diphosphate = orotate + 5-phospho-alpha-D-ribose 1-diphosphate. It participates in pyrimidine metabolism; UMP biosynthesis via de novo pathway; UMP from orotate: step 1/2. Catalyzes the transfer of a ribosyl phosphate group from 5-phosphoribose 1-diphosphate to orotate, leading to the formation of orotidine monophosphate (OMP). The polypeptide is Orotate phosphoribosyltransferase (Synechococcus sp. (strain CC9902)).